The following is a 116-amino-acid chain: RNA guanine-N7 methyltransferase activating subunit (116 aa).

Residues 1–55 (MAEALGAQELYEKMFEQRFTANDKEYQEYLKREQDQPPIVEDWKMGNQRNTDRYR) are interaction with RNMT. The segment at 31–116 (KREQDQPPIV…SNQRFHSDRY (86 aa)) is disordered. Positions 36-42 (QPPIVED) match the RNMT-activating domain motif. The segment at 56-116 (DNRHHRGWDG…SNQRFHSDRY (61 aa)) is RNA-binding. Over residues 67-78 (QNWSSNSYNQSY) the composition is skewed to low complexity. Polar residues predominate over residues 97–110 (YQQGHYTHNPSNQR).

The protein belongs to the RAM family.

Its subcellular location is the nucleus. Functionally, regulatory subunit of the mRNA-capping methyltransferase RNMT:RAMAC complex that methylates the N7 position of the added guanosine to the 5'-cap structure of mRNAs. Promotes the recruitment of the methyl donor, S-adenosyl-L-methionine, to RNMT. Regulates RNMT expression by a post-transcriptional stabilizing mechanism. Binds RNA. The polypeptide is RNA guanine-N7 methyltransferase activating subunit (ramac) (Xenopus tropicalis (Western clawed frog)).